Consider the following 601-residue polypeptide: Elongation factor 4 (601 aa).

Positions 5–187 constitute a tr-type G domain; sequence ENIRNFCIVA…AIITTFPPPK (183 aa). GTP-binding positions include 17-22 and 134-137; these read DHGKST and NKID.

It belongs to the TRAFAC class translation factor GTPase superfamily. Classic translation factor GTPase family. LepA subfamily.

Its subcellular location is the cell inner membrane. The enzyme catalyses GTP + H2O = GDP + phosphate + H(+). In terms of biological role, required for accurate and efficient protein synthesis under certain stress conditions. May act as a fidelity factor of the translation reaction, by catalyzing a one-codon backward translocation of tRNAs on improperly translocated ribosomes. Back-translocation proceeds from a post-translocation (POST) complex to a pre-translocation (PRE) complex, thus giving elongation factor G a second chance to translocate the tRNAs correctly. Binds to ribosomes in a GTP-dependent manner. The chain is Elongation factor 4 from Treponema denticola (strain ATCC 35405 / DSM 14222 / CIP 103919 / JCM 8153 / KCTC 15104).